The primary structure comprises 474 residues: tRNA-2-methylthio-N(6)-dimethylallyladenosine synthase (474 aa).

An MTTase N-terminal domain is found at 3 to 120 (KKLHIKTWGC…LPEMINHVQG (118 aa)). Residues cysteine 12, cysteine 49, cysteine 83, cysteine 157, cysteine 161, and cysteine 164 each contribute to the [4Fe-4S] cluster site. Residues 143 to 375 (RAEGPTAFVS…QQRISQQAME (233 aa)) enclose the Radical SAM core domain. The TRAM domain occupies 378–441 (RKMVGTVQRV…ASSLRGILLR (64 aa)).

This sequence belongs to the methylthiotransferase family. MiaB subfamily. As to quaternary structure, monomer. The cofactor is [4Fe-4S] cluster.

The protein resides in the cytoplasm. It carries out the reaction N(6)-dimethylallyladenosine(37) in tRNA + (sulfur carrier)-SH + AH2 + 2 S-adenosyl-L-methionine = 2-methylsulfanyl-N(6)-dimethylallyladenosine(37) in tRNA + (sulfur carrier)-H + 5'-deoxyadenosine + L-methionine + A + S-adenosyl-L-homocysteine + 2 H(+). In terms of biological role, catalyzes the methylthiolation of N6-(dimethylallyl)adenosine (i(6)A), leading to the formation of 2-methylthio-N6-(dimethylallyl)adenosine (ms(2)i(6)A) at position 37 in tRNAs that read codons beginning with uridine. In Yersinia pseudotuberculosis serotype O:1b (strain IP 31758), this protein is tRNA-2-methylthio-N(6)-dimethylallyladenosine synthase.